We begin with the raw amino-acid sequence, 96 residues long: Putative pterin-4-alpha-carbinolamine dehydratase (96 aa).

The protein belongs to the pterin-4-alpha-carbinolamine dehydratase family.

The enzyme catalyses (4aS,6R)-4a-hydroxy-L-erythro-5,6,7,8-tetrahydrobiopterin = (6R)-L-erythro-6,7-dihydrobiopterin + H2O. The sequence is that of Putative pterin-4-alpha-carbinolamine dehydratase from Prochlorococcus marinus (strain MIT 9515).